A 210-amino-acid polypeptide reads, in one-letter code: Uridine kinase (210 aa).

12–19 (GGSGGGKT) contacts ATP.

This sequence belongs to the uridine kinase family.

It is found in the cytoplasm. It carries out the reaction uridine + ATP = UMP + ADP + H(+). The enzyme catalyses cytidine + ATP = CMP + ADP + H(+). The protein operates within pyrimidine metabolism; CTP biosynthesis via salvage pathway; CTP from cytidine: step 1/3. It functions in the pathway pyrimidine metabolism; UMP biosynthesis via salvage pathway; UMP from uridine: step 1/1. The sequence is that of Uridine kinase from Streptococcus uberis (strain ATCC BAA-854 / 0140J).